The sequence spans 707 residues: Nucleolin 2 (707 aa).

The tract at residues M1–T446 is disordered. Basic and acidic residues-rich tracts occupy residues R30–V40 and T47–K60. Acidic residues-rich tracts occupy residues S75–E85, S108–D120, and D144–D153. The segment covering K158–A170 has biased composition (low complexity). Composition is skewed to acidic residues over residues D219 to D232, S248 to A263, and E271 to D287. The span at L300–D311 shows a compositional bias: basic and acidic residues. Residues E312–D326 are compositionally biased toward acidic residues. Positions S336–K347 are enriched in low complexity. Residues S355–D370 are compositionally biased toward acidic residues. The segment covering K376 to D394 has biased composition (low complexity). Acidic residues predominate over residues E395 to D406. The span at E407–T417 shows a compositional bias: basic and acidic residues. The span at S420–K429 shows a compositional bias: polar residues. The RRM 1 domain maps to K449–E525. Disordered regions lie at residues G527 to S546 and R629 to D707. An RRM 2 domain is found at N549–P630. Residues G657–H681 are compositionally biased toward basic and acidic residues.

The protein resides in the nucleus. Its subcellular location is the nucleolus. Involved in pre-rRNA processing and ribosome assembly. In Oryza sativa subsp. japonica (Rice), this protein is Nucleolin 2.